Reading from the N-terminus, the 276-residue chain is MEQLIRDEMRVLPSIDPHFEVTRRVEFIKTKLQQSGCKSLILGISGGVDSTTCGRLAQMAVDSLNESAGSDEYQFIAVRLPYGEQKDEDEAQLALSFIQPSQSVSVNIKAGVDGLHAASHVALEGTGLLPTDSAKIDFVKGNVKARARMIAQYEIAGYVGGLVIGTDHSAENITGFYTKHGDGACDLAPLFGLNKRQVRELAATLGAPEQLVKKVPTADLEELDPQKADEAALNLSYDQIDDFLEGKAVSQDVSDRLVGIYKATQHKRQPIPTIYD.

Residue 43–50 participates in ATP binding; it reads GISGGVDS. Asp49 lines the Mg(2+) pocket. Arg146 is a deamido-NAD(+) binding site. Thr166 is a binding site for ATP. Glu171 contacts Mg(2+). The deamido-NAD(+) site is built by Lys179 and Asp186. 2 residues coordinate ATP: Lys195 and Thr217. Deamido-NAD(+) is bound at residue 266 to 267; that stretch reads HK.

Belongs to the NAD synthetase family. Homodimer.

It carries out the reaction deamido-NAD(+) + NH4(+) + ATP = AMP + diphosphate + NAD(+) + H(+). It participates in cofactor biosynthesis; NAD(+) biosynthesis; NAD(+) from deamido-NAD(+) (ammonia route): step 1/1. Functionally, catalyzes the ATP-dependent amidation of deamido-NAD to form NAD. Uses ammonia as a nitrogen source. The sequence is that of NH(3)-dependent NAD(+) synthetase from Vibrio atlanticus (strain LGP32) (Vibrio splendidus (strain Mel32)).